Here is a 537-residue protein sequence, read N- to C-terminus: Cytochrome P450 monooxygenase ltmQ (537 aa).

Residues 10 to 30 form a helical membrane-spanning segment; that stretch reads FPKLNFATIVISGATIIGIIF. Asparagine 182, asparagine 188, and asparagine 310 each carry an N-linked (GlcNAc...) asparagine glycan. Cysteine 476 lines the heme pocket.

This sequence belongs to the cytochrome P450 family. Requires heme as cofactor.

The protein localises to the membrane. It functions in the pathway secondary metabolite biosynthesis. Its function is as follows. Cytochrome P450 monooxygenase; part of the gene clusters that mediates the biosynthesis of lolitrems, indole-diterpene mycotoxins that are potent tremorgens in mammals, and are synthesized by clavicipitaceous fungal endophytes in association with their grass hosts. The geranylgeranyl diphosphate (GGPP) synthase ltmG is proposed to catalyze the first step in lolitrem biosynthesis. LtmG catalyzes a series of iterative condensations of isopentenyl diphosphate (IPP) with dimethylallyl diphosphate (DMAPP), geranyl diphosphate (GPP), and farnesyl diphosphate (FPP), to form GGPP. GGPP then condenses with indole-3-glycerol phosphate to form 3-geranylgeranylindole, an acyclic intermediate, to be incorporated into paxilline. Either ltmG or ltmC could be responsible for this step, as both are putative prenyl transferases. The FAD-dependent monooxygenase ltmM then catalyzes the epoxidation of the two terminal alkenes of the geranylgeranyl moiety, which is subsequently cyclized by ltmB, to paspaline. The cytochrome P450 monooxygenases ltmQ and ltmP can sequentially oxidize paspaline to terpendole E and terpendole F. Alternatively, ltmP converts paspaline to an intermediate which is oxidized by ltmQ to terpendole F. LtmF, ltmK, ltmE and ltmJ appear to be unique to the epichloe endophytes. The prenyltransferase ltmF is involved in the 27-hydroxyl-O-prenylation. The cytochrome P450 monooxygenase ltmK is required for the oxidative acetal ring formation. The multi-functional prenyltransferase ltmE is required for C20- and C21-prenylations of the indole ring of paspalanes and acts together with the cytochrome P450 monooxygenase ltmJ to yield lolitremanes by multiple oxidations and ring closures. The stereoisomer pairs of lolitriol and lolitrem N or lolitrem B and lolitrem F may be attributed to variations in the way in which ring closure can occur under the action of ltmJ. While the major product of this pathway is lolitrem B, the prenyl transferases and cytochrome P450 monooxygenases identified in this pathway have a remarkable versatility in their regio- and stereo-specificities to generate a diverse range of metabolites that are products of a metabolic grid rather than a linear pathway. This is Cytochrome P450 monooxygenase ltmQ from Epichloe festucae var. lolii (Neotyphodium lolii).